Reading from the N-terminus, the 743-residue chain is Probable TonB-dependent siderophore receptor PiuA (743 aa).

The first 28 residues, 1–28 (MSLIRTRKKIVSSAIASSLSMIATTAMA), serve as a signal peptide directing secretion. Positions 61-167 (PLLDTPKSVS…VGGSINMISK (107 aa)) constitute a TBDR plug domain. Residues 172–743 (GDFLEGSVAA…SAVLAVNFKY (572 aa)) form the TBDR beta-barrel domain. 2 disulfides stabilise this stretch: cysteine 408/cysteine 416 and cysteine 627/cysteine 632.

Belongs to the TonB-dependent receptor family.

The protein resides in the cell outer membrane. In terms of biological role, probably involved in the initial step of iron uptake by binding iron chelating siderophores, thereby allowing extraction of iron from the environment. May bind the siderophore, ferric enterobactin, with micromolar affinity. The chain is Probable TonB-dependent siderophore receptor PiuA from Acinetobacter baumannii (strain ATCC 19606 / DSM 30007 / JCM 6841 / CCUG 19606 / CIP 70.34 / NBRC 109757 / NCIMB 12457 / NCTC 12156 / 81).